The sequence spans 171 residues: Transcription factor E (171 aa).

The HTH TFE/IIEalpha-type domain maps to Tyr-5–Glu-88.

Belongs to the TFE family. As to quaternary structure, monomer. Interaction with RNA polymerase subunits RpoF and RpoE is necessary for Tfe stimulatory transcription activity. Able to interact with Tbp and RNA polymerase in the absence of DNA promoter. Interacts both with the preinitiation and elongation complexes.

Its function is as follows. Transcription factor that plays a role in the activation of archaeal genes transcribed by RNA polymerase. Facilitates transcription initiation by enhancing TATA-box recognition by TATA-box-binding protein (Tbp), and transcription factor B (Tfb) and RNA polymerase recruitment. Not absolutely required for transcription in vitro, but particularly important in cases where Tbp or Tfb function is not optimal. It dynamically alters the nucleic acid-binding properties of RNA polymerases by stabilizing the initiation complex and destabilizing elongation complexes. Seems to translocate with the RNA polymerase following initiation and acts by binding to the non template strand of the transcription bubble in elongation complexes. In Cenarchaeum symbiosum (strain A), this protein is Transcription factor E.